Consider the following 366-residue polypeptide: Tyrosyl-DNA phosphodiesterase 2 (366 aa).

Methionine 1 carries the post-translational modification N-acetylmethionine. Over residues 1-22 (MASGSSSDAAESAEPAAAPAAA) the composition is skewed to low complexity. Residues 1–30 (MASGSSSDAAESAEPAAAPAAAETEEDQVK) are disordered. Lysine 30 is covalently cross-linked (Glycyl lysine isopeptide (Lys-Gly) (interchain with G-Cter in SUMO2)). Threonine 95 is subject to Phosphothreonine; by ACVR1B. The interaction with 5' end of substrate DNA stretch occupies residues 126-130 (NIDGL). Residues aspartate 128 and glutamate 158 each coordinate Mg(2+). The segment at 232–237 (HLESTR) is interaction with 5' end of substrate DNA. Aspartate 268 acts as the Proton donor/acceptor in catalysis. The interaction with 5' end of substrate DNA stretch occupies residues 270–272 (NLR).

The protein belongs to the CCR4/nocturin family. In terms of assembly, interacts with TRAF2, TRAF3, TRAF5, TRAF6, TNFRSF8/CD30, TNFRSF5/CD40, TNFRSF1B/TNF-R75, ETS1, ETS2, FLI1, SMAD3 and ACVR1B/ALK4. It depends on Mg(2+) as a cofactor. Requires Mn(2+) as cofactor. In terms of processing, ubiquitinated by TRAF6.

It localises to the nucleus. The protein localises to the PML body. The protein resides in the nucleolus. Its subcellular location is the cytoplasm. Its function is as follows. DNA repair enzyme that can remove a variety of covalent adducts from DNA through hydrolysis of a 5'-phosphodiester bond, giving rise to DNA with a free 5' phosphate. Catalyzes the hydrolysis of dead-end complexes between DNA and the topoisomerase 2 (TOP2) active site tyrosine residue. The 5'-tyrosyl DNA phosphodiesterase activity can enable the repair of TOP2-induced DNA double-strand breaks/DSBs without the need for nuclease activity, creating a 'clean' DSB with 5'-phosphate termini that are ready for ligation. Thereby, protects the transcription of many genes involved in neurological development and maintenance from the abortive activity of TOP2. Hydrolyzes 5'-phosphoglycolates on protruding 5' ends on DSBs due to DNA damage by radiation and free radicals. Has preference for single-stranded DNA or duplex DNA with a 4 base pair overhang as substrate. Also has 3'-tyrosyl DNA phosphodiesterase activity, but less efficiently and much slower than TDP1. Constitutes the major if not only 5'-tyrosyl-DNA phosphodiesterase in cells. Also acts as an adapter by participating in the specific activation of MAP3K7/TAK1 in response to TGF-beta: associates with components of the TGF-beta receptor-TRAF6-TAK1 signaling module and promotes their ubiquitination dependent complex formation. Involved in non-canonical TGF-beta induced signaling routes. May also act as a negative regulator of ETS1 and may inhibit NF-kappa-B activation. Acts as a regulator of ribosome biogenesis following stress. This Rattus norvegicus (Rat) protein is Tyrosyl-DNA phosphodiesterase 2 (Tdp2).